We begin with the raw amino-acid sequence, 353 residues long: Polyprenal reductase 2 (353 aa).

6 helical membrane-spanning segments follow: residues Pro11–Ile31, Phe78–Phe98, Met175–Ala195, Pro234–Leu254, Tyr291–Glu308, and Trp313–Leu335.

The protein belongs to the steroid 5-alpha reductase family. Polyprenal reductase subfamily.

It localises to the cell membrane. It catalyses the reaction a di-trans,poly-cis-dolichal + NADP(+) = a di-trans,poly-cis-polyprenal + NADPH + H(+). It participates in protein modification; protein glycosylation. Its function is as follows. Plays a key role in early steps of protein N-linked glycosylation by being involved in the conversion of polyprenol into dolichol. Acts as a polyprenal reductase that mediates the reduction of polyprenal into dolichal in a NADP-dependent mechanism. Dolichols are required for the synthesis of dolichol-linked monosaccharides and the oligosaccharide precursor used for N-glycosylation. The protein is Polyprenal reductase 2 of Oryza sativa subsp. indica (Rice).